Reading from the N-terminus, the 123-residue chain is Large ribosomal subunit protein bL12 (123 aa).

Belongs to the bacterial ribosomal protein bL12 family. Homodimer. Part of the ribosomal stalk of the 50S ribosomal subunit. Forms a multimeric L10(L12)X complex, where L10 forms an elongated spine to which 2 to 4 L12 dimers bind in a sequential fashion. Binds GTP-bound translation factors.

Functionally, forms part of the ribosomal stalk which helps the ribosome interact with GTP-bound translation factors. Is thus essential for accurate translation. The polypeptide is Large ribosomal subunit protein bL12 (Shewanella amazonensis (strain ATCC BAA-1098 / SB2B)).